The chain runs to 534 residues: CTP synthase (534 aa).

An amidoligase domain region spans residues 1-267 (MTKYIFVTGG…DQIVCDHLKL (267 aa)). CTP is bound at residue serine 13. Residue serine 13 participates in UTP binding. 14–19 (SIGKGI) contacts ATP. Position 54 (tyrosine 54) interacts with L-glutamine. An ATP-binding site is contributed by aspartate 71. Mg(2+) contacts are provided by aspartate 71 and glutamate 141. CTP contacts are provided by residues 148 to 150 (DIE), 188 to 193 (KTKPTQ), and lysine 224. Residues 188 to 193 (KTKPTQ) and lysine 224 contribute to the UTP site. Residue 240-242 (RNV) participates in ATP binding. The region spanning 292 to 534 (KIALVGKYVE…FVTAAIKNSN (243 aa)) is the Glutamine amidotransferase type-1 domain. Glycine 354 provides a ligand contact to L-glutamine. Cysteine 381 functions as the Nucleophile; for glutamine hydrolysis in the catalytic mechanism. L-glutamine is bound by residues 382–385 (LGMQ), glutamate 405, and arginine 463. Active-site residues include histidine 508 and glutamate 510.

It belongs to the CTP synthase family. In terms of assembly, homotetramer.

The enzyme catalyses UTP + L-glutamine + ATP + H2O = CTP + L-glutamate + ADP + phosphate + 2 H(+). It catalyses the reaction L-glutamine + H2O = L-glutamate + NH4(+). It carries out the reaction UTP + NH4(+) + ATP = CTP + ADP + phosphate + 2 H(+). The protein operates within pyrimidine metabolism; CTP biosynthesis via de novo pathway; CTP from UDP: step 2/2. With respect to regulation, allosterically activated by GTP, when glutamine is the substrate; GTP has no effect on the reaction when ammonia is the substrate. The allosteric effector GTP functions by stabilizing the protein conformation that binds the tetrahedral intermediate(s) formed during glutamine hydrolysis. Inhibited by the product CTP, via allosteric rather than competitive inhibition. In terms of biological role, catalyzes the ATP-dependent amination of UTP to CTP with either L-glutamine or ammonia as the source of nitrogen. Regulates intracellular CTP levels through interactions with the four ribonucleotide triphosphates. This is CTP synthase from Streptococcus pyogenes serotype M28 (strain MGAS6180).